Consider the following 96-residue polypeptide: DNA-directed RNA polymerase subunit Rpo11 (96 aa).

This sequence belongs to the archaeal Rpo11/eukaryotic RPB11/RPC19 RNA polymerase subunit family. As to quaternary structure, part of the RNA polymerase complex.

It is found in the cytoplasm. It catalyses the reaction RNA(n) + a ribonucleoside 5'-triphosphate = RNA(n+1) + diphosphate. In terms of biological role, DNA-dependent RNA polymerase (RNAP) catalyzes the transcription of DNA into RNA using the four ribonucleoside triphosphates as substrates. This Nanoarchaeum equitans (strain Kin4-M) protein is DNA-directed RNA polymerase subunit Rpo11.